A 100-amino-acid chain; its full sequence is NAD(P)H-quinone oxidoreductase subunit 4L, chloroplastic (100 aa).

3 consecutive transmembrane segments (helical) span residues 1 to 21, 31 to 51, and 60 to 80; these read MLEH…YGLI, MCLE…SDFF, and IFSI…PAIL.

The protein belongs to the complex I subunit 4L family. As to quaternary structure, NDH is composed of at least 16 different subunits, 5 of which are encoded in the nucleus.

It localises to the plastid. It is found in the chloroplast thylakoid membrane. The enzyme catalyses a plastoquinone + NADH + (n+1) H(+)(in) = a plastoquinol + NAD(+) + n H(+)(out). The catalysed reaction is a plastoquinone + NADPH + (n+1) H(+)(in) = a plastoquinol + NADP(+) + n H(+)(out). In terms of biological role, NDH shuttles electrons from NAD(P)H:plastoquinone, via FMN and iron-sulfur (Fe-S) centers, to quinones in the photosynthetic chain and possibly in a chloroplast respiratory chain. The immediate electron acceptor for the enzyme in this species is believed to be plastoquinone. Couples the redox reaction to proton translocation, and thus conserves the redox energy in a proton gradient. The chain is NAD(P)H-quinone oxidoreductase subunit 4L, chloroplastic from Cucumis sativus (Cucumber).